Here is a 540-residue protein sequence, read N- to C-terminus: T-complex protein 1 subunit theta (540 aa).

Belongs to the TCP-1 chaperonin family. As to quaternary structure, heterooligomeric complex of about 850 to 900 kDa that forms two stacked rings, 12 to 16 nm in diameter.

The protein localises to the cytoplasm. In terms of biological role, molecular chaperone; assists the folding of proteins upon ATP hydrolysis. Known to play a role, in vitro, in the folding of actin and tubulin. In yeast may play a role in mitotic spindle formation. The chain is T-complex protein 1 subunit theta (CCT8) from Candida albicans (Yeast).